Reading from the N-terminus, the 366-residue chain is Methyltransferase phm5 (366 aa).

Residues 204-205 (GG), aspartate 230, 255-256 (SM), arginine 273, and arginine 274 contribute to the S-adenosyl-L-methionine site.

It belongs to the class I-like SAM-binding methyltransferase superfamily. Cation-independent O-methyltransferase family.

It participates in secondary metabolite biosynthesis. Functionally, methyltransferase; part of the gene cluster that mediates the biosynthesis of the trans-fused decalin-containing tetramic acid phomasetin, the stereochemical opposite of the HIV-1 integrase inhibitor equisetin. The PKS module of phm1 together with the enoylreductase phm4 catalyze the formation of the polyketide unit which is then conjugated to L-serine by the condensation domain of the phm1 NRPS module. Activity of the Dieckmann cyclase domain (RED) of phm1 results in release of the Dieckmann product intermediate. The Diels-Alderase phm7 then uses the Dieckmann product of phm1 as substrate and catalyzes the Diels-Alder cycloaddition to form the decalin ring of N-desmethylphomasetin. N-desmethylphomasetin is further methylated to phomasetin by the methyltransferase phm5. The chain is Methyltransferase phm5 from Pyrenochaetopsis sp.